A 280-amino-acid polypeptide reads, in one-letter code: ESX-1 secretion-associated protein EspJ (280 aa).

Ser70 bears the Phosphoserine mark. 2 stretches are compositionally biased toward low complexity: residues 167–181 and 246–280; these read QTIS…QSAQ and PAQA…TTTL. The disordered stretch occupies residues 167 to 280; that stretch reads QTISQTAQQA…TPAPSTTTTL (114 aa).

Residues 76-280 interact with EsxB and an artificial EsxB-EsxA heterodimer. In terms of processing, phosphorylated at Ser-70.

It is found in the secreted. Functionally, could be involved in regulation of growth and intracellular survival. The sequence is that of ESX-1 secretion-associated protein EspJ from Mycobacterium tuberculosis (strain ATCC 25618 / H37Rv).